A 134-amino-acid polypeptide reads, in one-letter code: Fluoride-specific ion channel FluC (134 aa).

The next 4 helical transmembrane spans lie at 7-27 (LAVA…TIMA), 38-58 (GTLL…IVLV), 69-89 (LFLF…AAES), and 110-130 (VGSL…LLGH). Na(+) contacts are provided by Gly77 and Thr80.

The protein belongs to the fluoride channel Fluc/FEX (TC 1.A.43) family.

The protein localises to the cell inner membrane. The catalysed reaction is fluoride(in) = fluoride(out). With respect to regulation, na(+) is not transported, but it plays an essential structural role and its presence is essential for fluoride channel function. Fluoride-specific ion channel. Important for reducing fluoride concentration in the cell, thus reducing its toxicity. In Legionella pneumophila (strain Lens), this protein is Fluoride-specific ion channel FluC.